The chain runs to 780 residues: MANKNPLQKPFLFIILSINLIFLQAETTTQISTKKTYVIHMDKSAMPLPYTNHLQWYSSKINSVTQHKSQEEEGNNNRILYTYQTAFHGLAAQLTQEEAERLEEEDGVVAVIPETRYELHTTRSPTFLGLERQESERVWAERVTDHDVVVGVLDTGIWPESESFNDTGMSPVPATWRGACETGKRFLKRNCNRKIVGARVFYRGYEAATGKIDEELEYKSPRDRDGHGTHTAATVAGSPVKGANLFGFAYGTARGMAQKARVAAYKVCWVGGCFSSDILSAVDQAVADGVQVLSISLGGGVSTYSRDSLSIATFGAMEMGVFVSCSAGNGGPDPISLTNVSPWITTVGASTMDRDFPATVKIGTMRTFKGVSLYKGRTVLPKNKQYPLVYLGRNASSPDPTSFCLDGALDRRHVAGKIVICDRGVTPRVQKGQVVKRAGGIGMVLTNTATNGEELVADSHMLPAVAVGEKEGKLIKQYAMTSKKATASLEILGTRIGIKPSPVVAAFSSRGPNFLSLEILKPDLLAPGVNILAAWTGDMAPSSLSSDPRRVKFNILSGTSMSCPHVSGVAALIKSRHPDWSPAAIKSALMTTAYVHDNMFKPLTDASGAAPSSPYDHGAGHIDPLRATDPGLVYDIGPQEYFEFLCTQDLSPSQLKVFTKHSNRTCKHTLAKNPGNLNYPAISALFPENTHVKAMTLRRTVTNVGPHISSYKVSVSPFKGASVTVQPKTLNFTSKHQKLSYTVTFRTRFRMKRPEFGGLVWKSTTHKVRSPVIITWLPPL.

The N-terminal stretch at 1–25 (MANKNPLQKPFLFIILSINLIFLQA) is a signal peptide. A propeptide spans 26 to 120 (ETTTQISTKK…VIPETRYELH (95 aa)) (activation peptide). In terms of domain architecture, Inhibitor I9 spans 36–120 (TYVIHMDKSA…VIPETRYELH (85 aa)). The Peptidase S8 domain maps to 116 to 628 (RYELHTTRSP…AGHIDPLRAT (513 aa)). The active-site Charge relay system is the Asp154. N-linked (GlcNAc...) asparagine glycosylation occurs at Asn165. His227 acts as the Charge relay system in catalysis. The PA domain maps to 384–477 (KQYPLVYLGR…GEKEGKLIKQ (94 aa)). An N-linked (GlcNAc...) asparagine glycan is attached at Asn394. The active-site Charge relay system is Ser560. N-linked (GlcNAc...) asparagine glycosylation is found at Asn663 and Asn731.

The protein belongs to the peptidase S8 family.

The protein resides in the secreted. The chain is Subtilisin-like protease SBT1.3 from Arabidopsis thaliana (Mouse-ear cress).